Reading from the N-terminus, the 571-residue chain is Proline--tRNA ligase (571 aa).

The protein belongs to the class-II aminoacyl-tRNA synthetase family. ProS type 1 subfamily. As to quaternary structure, homodimer.

Its subcellular location is the cytoplasm. It carries out the reaction tRNA(Pro) + L-proline + ATP = L-prolyl-tRNA(Pro) + AMP + diphosphate. Its function is as follows. Catalyzes the attachment of proline to tRNA(Pro) in a two-step reaction: proline is first activated by ATP to form Pro-AMP and then transferred to the acceptor end of tRNA(Pro). As ProRS can inadvertently accommodate and process non-cognate amino acids such as alanine and cysteine, to avoid such errors it has two additional distinct editing activities against alanine. One activity is designated as 'pretransfer' editing and involves the tRNA(Pro)-independent hydrolysis of activated Ala-AMP. The other activity is designated 'posttransfer' editing and involves deacylation of mischarged Ala-tRNA(Pro). The misacylated Cys-tRNA(Pro) is not edited by ProRS. The chain is Proline--tRNA ligase from Shewanella baltica (strain OS195).